The primary structure comprises 251 residues: Small ribosomal subunit protein uS3 (251 aa).

The KH type-2 domain occupies 22 to 93; that stretch reads LNEFFTRELA…GIAIYAERVE (72 aa). The interval 223–251 is disordered; sequence TVKSYKQTAEDETETDAPVEAEAEVEATA. The span at 232-251 shows a compositional bias: acidic residues; it reads EDETETDAPVEAEAEVEATA.

Belongs to the universal ribosomal protein uS3 family. In terms of assembly, component of the small ribosomal subunit. Mature ribosomes consist of a small (40S) and a large (60S) subunit. The 40S subunit contains about 32 different proteins and 1 molecule of RNA (18S). The 60S subunit contains 45 different proteins and 3 molecules of RNA (25S, 5.8S and 5S).

Its subcellular location is the cytoplasm. Component of the ribosome, a large ribonucleoprotein complex responsible for the synthesis of proteins in the cell. The small ribosomal subunit (SSU) binds messenger RNAs (mRNAs) and translates the encoded message by selecting cognate aminoacyl-transfer RNA (tRNA) molecules. The large subunit (LSU) contains the ribosomal catalytic site termed the peptidyl transferase center (PTC), which catalyzes the formation of peptide bonds, thereby polymerizing the amino acids delivered by tRNAs into a polypeptide chain. The nascent polypeptides leave the ribosome through a tunnel in the LSU and interact with protein factors that function in enzymatic processing, targeting, and the membrane insertion of nascent chains at the exit of the ribosomal tunnel. The protein is Small ribosomal subunit protein uS3 (RPS3) of Candida albicans (strain SC5314 / ATCC MYA-2876) (Yeast).